The primary structure comprises 176 residues: ADP-ribosylation factor-like protein 8d (176 aa).

GTP is bound by residues N21 to S26, M40 to T43, D62 to Q66, and N121 to D124.

The protein belongs to the small GTPase superfamily. Arf family. As to quaternary structure, interacts with tubulin.

Its subcellular location is the late endosome membrane. The protein localises to the lysosome membrane. It is found in the cytoplasm. It localises to the cytoskeleton. The protein resides in the spindle. Functionally, may play a role in lysosome motility. May play a role in chromosome segregation. This chain is ADP-ribosylation factor-like protein 8d, found in Arabidopsis thaliana (Mouse-ear cress).